The sequence spans 557 residues: Dihydroxy-acid dehydratase (557 aa).

Asp-78 is a Mg(2+) binding site. Residue Cys-119 coordinates [2Fe-2S] cluster. Mg(2+)-binding residues include Asp-120 and Lys-121. Lys-121 carries the post-translational modification N6-carboxylysine. Position 192 (Cys-192) interacts with [2Fe-2S] cluster. Glu-442 serves as a coordination point for Mg(2+). Ser-468 functions as the Proton acceptor in the catalytic mechanism.

It belongs to the IlvD/Edd family. As to quaternary structure, homodimer. Requires [2Fe-2S] cluster as cofactor. It depends on Mg(2+) as a cofactor.

The enzyme catalyses (2R)-2,3-dihydroxy-3-methylbutanoate = 3-methyl-2-oxobutanoate + H2O. It carries out the reaction (2R,3R)-2,3-dihydroxy-3-methylpentanoate = (S)-3-methyl-2-oxopentanoate + H2O. It participates in amino-acid biosynthesis; L-isoleucine biosynthesis; L-isoleucine from 2-oxobutanoate: step 3/4. It functions in the pathway amino-acid biosynthesis; L-valine biosynthesis; L-valine from pyruvate: step 3/4. Its function is as follows. Functions in the biosynthesis of branched-chain amino acids. Catalyzes the dehydration of (2R,3R)-2,3-dihydroxy-3-methylpentanoate (2,3-dihydroxy-3-methylvalerate) into 2-oxo-3-methylpentanoate (2-oxo-3-methylvalerate) and of (2R)-2,3-dihydroxy-3-methylbutanoate (2,3-dihydroxyisovalerate) into 2-oxo-3-methylbutanoate (2-oxoisovalerate), the penultimate precursor to L-isoleucine and L-valine, respectively. This Bacillus cytotoxicus (strain DSM 22905 / CIP 110041 / 391-98 / NVH 391-98) protein is Dihydroxy-acid dehydratase.